The chain runs to 368 residues: Cobalt-precorrin-5B C(1)-methyltransferase (368 aa).

The protein belongs to the CbiD family.

It carries out the reaction Co-precorrin-5B + S-adenosyl-L-methionine = Co-precorrin-6A + S-adenosyl-L-homocysteine. It participates in cofactor biosynthesis; adenosylcobalamin biosynthesis; cob(II)yrinate a,c-diamide from sirohydrochlorin (anaerobic route): step 6/10. In terms of biological role, catalyzes the methylation of C-1 in cobalt-precorrin-5B to form cobalt-precorrin-6A. This chain is Cobalt-precorrin-5B C(1)-methyltransferase, found in Synechococcus sp. (strain CC9605).